Here is a 109-residue protein sequence, read N- to C-terminus: Nucleoid-associated protein Shal_1591 (109 aa).

Residues asparagine 87–phenylalanine 109 are disordered.

Belongs to the YbaB/EbfC family. Homodimer.

The protein localises to the cytoplasm. It localises to the nucleoid. Functionally, binds to DNA and alters its conformation. May be involved in regulation of gene expression, nucleoid organization and DNA protection. This chain is Nucleoid-associated protein Shal_1591, found in Shewanella halifaxensis (strain HAW-EB4).